The sequence spans 525 residues: Cytochrome P450 4V2 (525 aa).

A helical membrane pass occupies residues 13-33 (LLLWGAASAVSVAGATVLLNI). Heme-binding residues include glutamate 329 and cysteine 467.

This sequence belongs to the cytochrome P450 family. Requires heme as cofactor.

Its subcellular location is the endoplasmic reticulum membrane. It catalyses the reaction dodecanoate + reduced [NADPH--hemoprotein reductase] + O2 = 12-hydroxydodecanoate + oxidized [NADPH--hemoprotein reductase] + H2O + H(+). The catalysed reaction is tetradecanoate + reduced [NADPH--hemoprotein reductase] + O2 = 14-hydroxytetradecanoate + oxidized [NADPH--hemoprotein reductase] + H2O + H(+). It carries out the reaction hexadecanoate + reduced [NADPH--hemoprotein reductase] + O2 = 16-hydroxyhexadecanoate + oxidized [NADPH--hemoprotein reductase] + H2O + H(+). The enzyme catalyses (5Z,8Z,11Z,14Z,17Z)-eicosapentaenoate + reduced [NADPH--hemoprotein reductase] + O2 = 20-hydroxy-(5Z,8Z,11Z,14Z,17Z)-eicosapentaenoate + oxidized [NADPH--hemoprotein reductase] + H2O + H(+). It catalyses the reaction (4Z,7Z,10Z,13Z,16Z,19Z)-docosahexaenoate + reduced [NADPH--hemoprotein reductase] + O2 = 22-hydroxy-(4Z,7Z,10Z,13Z,16Z,19Z)-docosahexaenoate + oxidized [NADPH--hemoprotein reductase] + H2O + H(+). The protein operates within lipid metabolism; fatty acid metabolism. Inhibited by N-hydroxy-N'-(4-n-butyl-2-methylphenyl formamidine)(HET0016) with an IC(50) of 38 nM. Its function is as follows. A cytochrome P450 monooxygenase involved in fatty acid metabolism in the eye. Catalyzes the omega-hydroxylation of polyunsaturated fatty acids (PUFAs) docosahexaenoate (DHA) and its precursor eicosapentaenoate (EPA), and may contribute to the homeostasis of these retinal PUFAs. Omega hydroxylates saturated fatty acids such as laurate, myristate and palmitate, the catalytic efficiency decreasing in the following order: myristate &gt; laurate &gt; palmitate (C14&gt;C12&gt;C16). Mechanistically, uses molecular oxygen inserting one oxygen atom into a substrate, and reducing the second into a water molecule, with two electrons provided by NADPH via cytochrome P450 reductase (CPR; NADPH-ferrihemoprotein reductase). The protein is Cytochrome P450 4V2 (Cyp4v2) of Rattus norvegicus (Rat).